We begin with the raw amino-acid sequence, 1397 residues long: Clustered mitochondria protein homolog (1397 aa).

The TPR 1 repeat unit spans residues 30-63 (LPSFIDQKGDLKIPSHYEETITDLKLTLTVIPKT). 2 disordered regions span residues 158-203 (TARG…LSRE) and 526-555 (DAAP…DEEE). Positions 161–203 (GEAEKSDTNEEEQEQGKGKVGKPNEKESGETKETDSQPELSRE) are enriched in basic and acidic residues. In terms of domain architecture, Clu spans 368–640 (DSSRSQLMLI…RTTPRDIEFI (273 aa)). Residues 559–595 (EKVLYGLSSDSQKILEDKSFEKPLKLLSEVFHLKPHG) form a TPR 2 repeat. Basic and acidic residues-rich tracts occupy residues 686 to 703 (EGKL…EEKS), 812 to 831 (EKVE…KERA), 839 to 860 (SDDK…NTES), and 1019 to 1033 (QREQ…NVEK). Disordered regions lie at residues 686–707 (EGKL…QIAL), 812–869 (EKVE…EEQP), and 1019–1050 (QREQ…PIEN). Residues 1034-1043 (KHSKKSKKKS) are compositionally biased toward basic residues. 2 TPR repeats span residues 1167 to 1200 (IAAY…WTST) and 1209 to 1242 (VNLL…CSHL). 2 stretches are compositionally biased toward polar residues: residues 1314–1338 (AQSK…SQAS) and 1362–1373 (PQSDPQIANQSV). Residues 1314 to 1397 (AQSKKSPPPT…AKSKSKHTKA (84 aa)) form a disordered region. The span at 1375-1384 (DILKFIEGKS) shows a compositional bias: basic and acidic residues. Positions 1386-1397 (PNAKSKSKHTKA) are enriched in basic residues.

It belongs to the CLU family. May associate with the eukaryotic translation initiation factor 3 (eIF-3) complex.

The protein localises to the cytoplasm. MRNA-binding protein involved in proper cytoplasmic distribution of mitochondria. The polypeptide is Clustered mitochondria protein homolog (Lodderomyces elongisporus (strain ATCC 11503 / CBS 2605 / JCM 1781 / NBRC 1676 / NRRL YB-4239) (Yeast)).